The chain runs to 98 residues: Putative pterin-4-alpha-carbinolamine dehydratase (98 aa).

The protein belongs to the pterin-4-alpha-carbinolamine dehydratase family.

The enzyme catalyses (4aS,6R)-4a-hydroxy-L-erythro-5,6,7,8-tetrahydrobiopterin = (6R)-L-erythro-6,7-dihydrobiopterin + H2O. This Mesorhizobium japonicum (strain LMG 29417 / CECT 9101 / MAFF 303099) (Mesorhizobium loti (strain MAFF 303099)) protein is Putative pterin-4-alpha-carbinolamine dehydratase.